Consider the following 137-residue polypeptide: Large ribosomal subunit protein uL16 (137 aa).

This sequence belongs to the universal ribosomal protein uL16 family. Part of the 50S ribosomal subunit.

Binds 23S rRNA and is also seen to make contacts with the A and possibly P site tRNAs. The protein is Large ribosomal subunit protein uL16 of Nitratidesulfovibrio vulgaris (strain ATCC 29579 / DSM 644 / CCUG 34227 / NCIMB 8303 / VKM B-1760 / Hildenborough) (Desulfovibrio vulgaris).